A 548-amino-acid chain; its full sequence is Chaperonin GroEL (548 aa).

ATP-binding positions include 29–32 (TMGP), K50, 86–90 (DGTTT), G414, 478–480 (NAA), and D494.

It belongs to the chaperonin (HSP60) family. As to quaternary structure, forms a cylinder of 14 subunits composed of two heptameric rings stacked back-to-back. Interacts with the co-chaperonin GroES.

The protein localises to the cytoplasm. It catalyses the reaction ATP + H2O + a folded polypeptide = ADP + phosphate + an unfolded polypeptide.. Its function is as follows. Together with its co-chaperonin GroES, plays an essential role in assisting protein folding. The GroEL-GroES system forms a nano-cage that allows encapsulation of the non-native substrate proteins and provides a physical environment optimized to promote and accelerate protein folding. May play a protective role against the defense mechanisms generated by the infected macrophages. This Legionella pneumophila subsp. pneumophila (strain Philadelphia 1 / ATCC 33152 / DSM 7513) protein is Chaperonin GroEL.